Here is a 100-residue protein sequence, read N- to C-terminus: Cell division protein DrpB (100 aa).

The Cytoplasmic portion of the chain corresponds to 1–16 (MEYGSTKMEERLSRSP). The helical transmembrane segment at 17–37 (GGKLALWAFYTWCGYFVWAMA) threads the bilayer. Residues 38 to 64 (RYIWVMSRIPDAPVSGFESDLGSTAGK) are Periplasmic-facing. A helical transmembrane segment spans residues 65–85 (WLGALVGFLFMALVGALLGSI). The Cytoplasmic portion of the chain corresponds to 86-100 (AWYTRPRPARSRRYE).

It belongs to the DrpB family. Bacterial adenylate cyclase hybrid (BACTH) studies show interaction of this protein with DamX, FtsI, FtsN, FtsQ, YmgF, DedD, FtsA and MalF, as well as weaker interactions with DedD, MalG and PBP2, but this assay often generates false positive results.

It localises to the cell inner membrane. Functionally, a non-essential division protein that localizes to the septal ring in low ionic strength medium. In terms of biological role, localizes to the septal ring in about 30% of observed cells before cell constriction occurs; localization occurs in low ionic strength medium (0 NaCl) and requires FtsZ but not FtsEX. Overexpression partially restores correct FtsI localization to the division septum in an ftsEX deletion. Isolated as a multicopy suppressor of an ftsEX deletion mutant; it does not suppress other cell division defects (e.g. ftsA, ftsI, ftsQ or ftsZ). The protein is Cell division protein DrpB of Escherichia coli (strain K12).